The following is a 435-amino-acid chain: rRNA methyltransferase 3A, mitochondrial (435 aa).

The transit peptide at 1-42 (MAALMYNVSRGLVMLGERSLFQRERYQILVNSRRFLRGLRRR) directs the protein to the mitochondrion. The span at 314-324 (KQLVSGQTENV) shows a compositional bias: polar residues. Residues 314–351 (KQLVSGQTENVSSDDYSESDSDDDDDEEEDEDSLPHVK) form a disordered region. A compositionally biased stretch (acidic residues) spans 328-345 (DYSESDSDDDDDEEEDED). Positions 369 and 402 each coordinate S-adenosyl-L-methionine.

It belongs to the class IV-like SAM-binding methyltransferase superfamily. RNA methyltransferase TrmH family.

It is found in the mitochondrion. The enzyme catalyses a uridine in rRNA + S-adenosyl-L-methionine = a 2'-O-methyluridine in rRNA + S-adenosyl-L-homocysteine + H(+). In terms of biological role, S-adenosyl-L-methionine-dependent 2'-O-ribose methyltransferase that catalyzes the formation of 2'-O-methylguanosine at position 1485 (Gm1485) in the mitochondrial large subunit ribosomal RNA (mtLSU rRNA), a conserved modification in the peptidyl transferase domain of the mtLSU rRNA. Also required for formation of 2'-O-methyluridine at position 1484 (Um1484) mediated by MRM2. This is rRNA methyltransferase 3A, mitochondrial (mrm3a) from Danio rerio (Zebrafish).